The following is a 296-amino-acid chain: 2-haloacid dehalogenase, configuration-inverting (296 aa).

The protein belongs to the HAD-like hydrolase superfamily. S-2-haloalkanoic acid dehalogenase family.

It catalyses the reaction an (S)-2-haloacid + H2O = a (2R)-2-hydroxycarboxylate + a halide anion + H(+). It carries out the reaction an (R)-2-haloacid + H2O = a (2S)-2-hydroxycarboxylate + a halide anion + H(+). Dehalogenates both (S)- and (R)-2-haloalkanoic acids to the corresponding (R)- and (S)-hydroxyalkanoic acids, respectively, with inversion of configuration at C-2. Acts on 2-haloalkanoic acids whose carbon chain lengths are five or less. The sequence is that of 2-haloacid dehalogenase, configuration-inverting (dhlC) from Alcaligenes xylosoxydans xylosoxydans (Achromobacter xylosoxidans).